The primary structure comprises 457 residues: Peptidyl-prolyl cis-trans isomerase FKBP5 (457 aa).

At M1 the chain carries N-acetylmethionine. The interval 1-26 is disordered; that stretch reads MTTDEGAKNNGESPTATVAEQGEDIT. S13 is subject to Phosphoserine. PPIase FKBP-type domains are found at residues 50–138 and 165–251; these read GDKV…LDFK and GATV…KSFE. TPR repeat units follow at residues 268–301, 317–350, and 351–384; these read AAIV…LEME, LAAF…DSAN, and GKGL…NPQN. A disordered region spans residues 420–457; sequence DAKEEANKAMGKKTSEGVTNEKGTDSQAMEEEKPEGHV. Position 445 is a phosphoserine (S445).

As to quaternary structure, part of a heteromultimeric cytoplasmic complex with HSP90AA1, HSPA1A/HSPA1B and steroid receptors. Upon ligand binding dissociates from the complex and FKBP4 takes its place. Interacts with functionally mature heterooligomeric progesterone receptor complexes along with HSP90 and TEBP. Interacts with IFI44L; this interaction modulates the kinase activity of IKBKB and IKBKE. Interacts with IKBKB and IKBKE.

The protein localises to the cytoplasm. The protein resides in the nucleus. The enzyme catalyses [protein]-peptidylproline (omega=180) = [protein]-peptidylproline (omega=0). Inhibited by FK506 but not cyclosporin. Its function is as follows. Immunophilin protein with PPIase and co-chaperone activities. Component of unligated steroid receptors heterocomplexes through interaction with heat-shock protein 90 (HSP90). Plays a role in the intracellular trafficking of heterooligomeric forms of steroid hormone receptors maintaining the complex into the cytoplasm when unliganded. Acts as a regulator of Akt/AKT1 activity by promoting the interaction between Akt/AKT1 and PHLPP1, thereby enhancing dephosphorylation and subsequent activation of Akt/AKT1. Interacts with IKBKE and IKBKB which facilitates IKK complex assembly leading to increased IKBKE and IKBKB kinase activity, NF-kappaB activation, and IFN production. This Pongo abelii (Sumatran orangutan) protein is Peptidyl-prolyl cis-trans isomerase FKBP5 (FKBP5).